Consider the following 829-residue polypeptide: Ent-cassa-12,15-diene synthase (829 aa).

A disordered region spans residues 1-50 (MMLLGSPSSGGYGGKFAGASPAGGTTTMAPSAKQPSSRAPPPGITGGRND). Residues 23-37 (GGTTTMAPSAKQPSS) are compositionally biased toward polar residues. Mg(2+) contacts are provided by Asp-576, Asp-580, Asn-720, and Glu-728. The short motif at 576–580 (DDLFD) is the DDXXD motif element.

Belongs to the terpene synthase family. Mg(2+) serves as cofactor. As to expression, expressed in roots and stems.

The enzyme catalyses ent-copalyl diphosphate = ent-cassa-12,15-diene + diphosphate. Its function is as follows. Involved in phytocassane phytoalexins biosynthesis. Catalyzes the conversion of ent-copalyl diphosphate to the phytoalexin precursor ent-cassa-12,15-diene. This Oryza sativa subsp. japonica (Rice) protein is Ent-cassa-12,15-diene synthase (KSL7).